Consider the following 126-residue polypeptide: Large-conductance mechanosensitive channel (126 aa).

2 helical membrane passes run 14–34 (VIDL…VNSL) and 66–86 (FITT…LVVV).

The protein belongs to the MscL family. Homopentamer.

Its subcellular location is the cell membrane. In terms of biological role, channel that opens in response to stretch forces in the membrane lipid bilayer. May participate in the regulation of osmotic pressure changes within the cell. The polypeptide is Large-conductance mechanosensitive channel (Roseiflexus sp. (strain RS-1)).